A 347-amino-acid polypeptide reads, in one-letter code: MAEPDSVNEAKEKKKKLWKAVFAISGIMLTLVIYGLLQEKIMRVPYGLKKEYFKHSLFLVFCNRLTTSAVSAAALLASKKVLDPVAPVYKYCLISVTNILTTTCQYEALKYVSFPVQTLAKCAKMIPVMVWGTLIMQKKYRGFDYLVAFLVTLGCSVFILFPAGDDISPYNKGRENTVWGVSLMVGYLGFDGFTSTFQDKLFKGYNMEIHNQIFYTTICSSILSFTGLILQGHLLPAVDFVSRHRDCLFDIALLSTVATASQFFISYTIRTFGALTFAAIMTTRQLASIMLSCIWFSHPLSWEQCIGSVIVFGSLYAKTFVKKKSEKPPAAQELPRDEEAQPLKGNP.

Transmembrane regions (helical) follow at residues 17-37 (LWKAVFAISGIMLTLVIYGLL), 57-77 (LFLVFCNRLTTSAVSAAALLA), 116-136 (VQTLAKCAKMIPVMVWGTLIM), 143-163 (FDYLVAFLVTLGCSVFILFPA), 177-197 (TVWGVSLMVGYLGFDGFTSTF), 218-238 (ICSSILSFTGLILQGHLLPAV), 247-267 (CLFDIALLSTVATASQFFISY), and 293-313 (CIWFSHPLSWEQCIGSVIVFG). Positions 325–347 (SEKPPAAQELPRDEEAQPLKGNP) are disordered.

The protein belongs to the nucleotide-sugar transporter family. UDP-galactose:UMP antiporter (TC 2.A.7.11) subfamily.

The protein localises to the membrane. Sugar transporter involved in the transport of nucleotide-sugars from cytoplasm into the Golgi and/or the endoplasmic reticulum. The sequence is that of UDP-galactose/UDP-glucose transporter 5 from Arabidopsis thaliana (Mouse-ear cress).